The following is a 255-amino-acid chain: Small ribosomal subunit protein eS1 (255 aa).

Position 2 is an N-acetylalanine; partial (alanine 2).

The protein belongs to the eukaryotic ribosomal protein eS1 family. Component of the small ribosomal subunit. Mature ribosomes consist of a small (40S) and a large (60S) subunit. The 40S subunit contains about 33 different proteins and 1 molecule of RNA (18S). The 60S subunit contains about 49 different proteins and 3 molecules of RNA (25S, 5.8S and 5S).

The protein localises to the cytoplasm. The sequence is that of Small ribosomal subunit protein eS1 from Yarrowia lipolytica (strain CLIB 122 / E 150) (Yeast).